The sequence spans 102 residues: Large ribosomal subunit protein bL21 (102 aa).

Positions 79-91 (RKDSKRKKGHRQP) are enriched in basic residues. The interval 79–102 (RKDSKRKKGHRQPYTKLTIDKINA) is disordered.

This sequence belongs to the bacterial ribosomal protein bL21 family. Part of the 50S ribosomal subunit. Contacts protein L20.

Its function is as follows. This protein binds to 23S rRNA in the presence of protein L20. The chain is Large ribosomal subunit protein bL21 from Staphylococcus epidermidis (strain ATCC 35984 / DSM 28319 / BCRC 17069 / CCUG 31568 / BM 3577 / RP62A).